The sequence spans 479 residues: Polyadenylate-binding protein-interacting protein 1 (479 aa).

The interval 1–114 is disordered; that stretch reads MSDGFDRAPG…PQQNSESAMA (114 aa). Ser2 is subject to N-acetylalanine. Residues 11–33 are compositionally biased toward gly residues; sequence AGRGRSRGLGRGGGGPEGGGFPN. Arg21 bears the Omega-N-methylarginine mark. Positions 45–69 are enriched in pro residues; sequence PPQPKAPGFLQPPPLRQPRTTPPPG. A compositionally biased stretch (polar residues) spans 98-111; that stretch reads PSSQDKIPQQNSES. Residues 116-143 are PABPC1-interacting motif-2 (PAM2); sequence PQVVVAPVLMSKLSVNAPEFYPSGYSSS. The PAIP1 middle domain (PAIP1M) stretch occupies residues 157 to 375; it reads TLSEYVQDFL…LLKLVELRSS (219 aa). The MIF4G domain maps to 159–376; it reads SEYVQDFLNH…LKLVELRSSN (218 aa). A disordered region spans residues 435–455; that stretch reads DYEENGTDLSGAGDPYLDDID. The segment at 440-479 is PABPC1-interacting motif-1 (PAM1); sequence GTDLSGAGDPYLDDIDDEMDPEIEEAYEKFCLESERKRKQ.

In terms of assembly, interacts with the RRM1-RRM2 and C-terminus regions of PABPC1 in a 1:1 stoichiometry. Interacts with EIF4A. As to quaternary structure, (Microbial infection) Interacts (via PAIP1M) with human SARS coronaviruses SARS-COV and SARS-COV-2 NSP3 protein (via SARS-unique domain); the interaction increases binding affinity with PABPC1.

Its subcellular location is the cytoplasm. Acts as a coactivator in the regulation of translation initiation of poly(A)-containing mRNAs. Its stimulatory activity on translation is mediated via its action on PABPC1. Competes with PAIP2 for binding to PABPC1. Its association with EIF4A and PABPC1 may potentiate contacts between mRNA termini. May also be involved in translationally coupled mRNA turnover. Implicated with other RNA-binding proteins in the cytoplasmic deadenylation/translational and decay interplay of the FOS mRNA mediated by the major coding-region determinant of instability (mCRD) domain. In terms of biological role, (Microbial infection) Upon interaction with SARS coronavirus SARS-CoV NSP3 protein, plays an important role in viral protein synthesis. The sequence is that of Polyadenylate-binding protein-interacting protein 1 from Homo sapiens (Human).